The sequence spans 210 residues: Outer-membrane lipoprotein LolB (210 aa).

Residues 1-29 (MSLISNNEERSLRVRYCIAIALSALLISG) form the signal peptide. A lipid anchor (N-palmitoyl cysteine) is attached at cysteine 30. Cysteine 30 carries S-diacylglycerol cysteine lipidation.

This sequence belongs to the LolB family. Monomer.

The protein localises to the cell outer membrane. In terms of biological role, plays a critical role in the incorporation of lipoproteins in the outer membrane after they are released by the LolA protein. This Coxiella burnetii (strain CbuK_Q154) (Coxiella burnetii (strain Q154)) protein is Outer-membrane lipoprotein LolB.